The following is a 255-amino-acid chain: 3-hydroxyacyl-CoA dehydrogenase type-2 (255 aa).

Residues serine 14, leucine 16, aspartate 35, aspartate 58, valine 59, and cysteine 85 each contribute to the NAD(+) site. Serine 149 contacts substrate. NAD(+) is bound by residues tyrosine 162, lysine 166, phenylalanine 195, and threonine 197. Tyrosine 162 (proton acceptor) is an active-site residue.

Belongs to the short-chain dehydrogenases/reductases (SDR) family. Component of mitochondrial ribonuclease P, a complex composed of rswl/MRPP1, scu/MRPP2 and mldr/MRPP3. As to expression, found in many tissues including CNS, imaginal disks and salivary glands. Highest expression in both embryonic gonadal primordia and mature ovaries and testes.

The protein resides in the mitochondrion. The enzyme catalyses a (3S)-3-hydroxyacyl-CoA + NAD(+) = a 3-oxoacyl-CoA + NADH + H(+). The catalysed reaction is (3S)-3-hydroxybutanoyl-CoA + NAD(+) = acetoacetyl-CoA + NADH + H(+). It carries out the reaction testosterone + NAD(+) = androst-4-ene-3,17-dione + NADH + H(+). It catalyses the reaction 5alpha-androstane-3alpha,17beta-diol + NAD(+) = 17beta-hydroxy-5alpha-androstan-3-one + NADH + H(+). The enzyme catalyses 17beta-estradiol + NAD(+) = estrone + NADH + H(+). The catalysed reaction is ursodeoxycholate + NAD(+) = 7-oxolithocholate + NADH + H(+). It carries out the reaction 3beta,7beta-dihydroxy-5beta-cholan-24-oate + NAD(+) = 3beta-hydroxy-7-oxo-5beta-cholan-24-oate + NADH + H(+). It catalyses the reaction 11-dehydrocorticosterone + NAD(+) = pregn-4-ene-3,11,20,21-tetraone + NADH + H(+). The enzyme catalyses cortisone + NAD(+) = 17alpha-hydroxypregn-4-en-3,11,20-trione-21-al + NADH + H(+). The catalysed reaction is cortisol + NAD(+) = 11beta,17alpha-dihydroxypregn-4-ene-3,20,21-trione + NADH + H(+). It carries out the reaction 5alpha-pregnan-20beta-ol-3-one + NAD(+) = 5alpha-pregnane-3,20-dione + NADH + H(+). It catalyses the reaction 17beta-hydroxy-5alpha-androstan-3-one + NAD(+) = 5alpha-androstan-3,17-dione + NADH + H(+). Functionally, mitochondrial dehydrogenase involved in pathways of fatty acid, and steroid metabolism. Versatile enzyme presenting two types of activity; L-3-hydroxyacyl-CoA dehydrogenase ((3S)-3-hydroxyacyl-CoA dehydrogenase) activity and hydroxysteroid dehydrogenase (HSD) activity with a wide substrate spectrum. As a (3S)-3-hydroxyacyl-CoA dehydrogenase, it functions in the third step of the fatty acid beta-oxidation pathway, a major metabolic process in which fatty acids are oxidized to provide a significant source of energy, while also generating acyl-CoA metabolites used by many metabolic routes. As a HSD, it functions in the degradation pathways of glucocorticoids and sex steroids and epimerization of bile acids; catalyzes the beta-oxidation at position 17 of androgens and estrogens, has 3-alpha-hydroxysteroid dehydrogenase activity with androsterone, and carries out oxidative conversions of 7-beta-hydroxylated bile acids like ursodeoxycholate or isoursodeoxycholate (also known as 3-beta,7-beta-dihydroxy-5-beta-cholan-24-oate or 7-beta-hydroxyisolithocholate, respectively). Also exhibits 20-beta-OH and 21-OH dehydrogenase activities with C21 steroids. Essential for structural and functional integrity of mitochondria. Required for cell survival during embryonic development. May play a role in germline formation. Its function is as follows. In addition to mitochondrial dehydrogenase activity, moonlights as a component of mitochondrial ribonuclease P, a complex that cleaves tRNA molecules in their 5'-ends. Essential for the structural and functional integrity of mitochondria. Function is essential for pupal development. The sequence is that of 3-hydroxyacyl-CoA dehydrogenase type-2 from Drosophila melanogaster (Fruit fly).